A 439-amino-acid polypeptide reads, in one-letter code: Taxadien-5-alpha-ol O-acetyltransferase (439 aa).

Active-site proton acceptor residues include histidine 164 and aspartate 373.

The protein belongs to the plant acyltransferase family.

It catalyses the reaction taxa-4(20),11-dien-5alpha-ol + acetyl-CoA = taxa-4(20),11-dien-5alpha-yl acetate + CoA. It functions in the pathway alkaloid biosynthesis; taxol biosynthesis; 10-deacetyl-2-debenzoylbaccatin III from taxa-4(20),11-dien-5alpha-ol: step 1/3. This is Taxadien-5-alpha-ol O-acetyltransferase (TAT) from Taxus cuspidata (Japanese yew).